Reading from the N-terminus, the 151-residue chain is Large-conductance mechanosensitive channel (151 aa).

2 helical membrane-spanning segments follow: residues 12–32 (GNIV…ALVT) and 71–91 (VLLS…FLVV). The tract at residues 125–151 (NSNSSGRHEAPGTAGTPPPNYGPRADT) is disordered.

This sequence belongs to the MscL family. Homopentamer.

It is found in the cell membrane. In terms of biological role, channel that opens in response to stretch forces in the membrane lipid bilayer. May participate in the regulation of osmotic pressure changes within the cell. The polypeptide is Large-conductance mechanosensitive channel (Mycobacterium ulcerans (strain Agy99)).